We begin with the raw amino-acid sequence, 404 residues long: Translation initiation factor eIF2B subunit gamma (404 aa).

The protein belongs to the eIF-2B gamma/epsilon subunits family. As to quaternary structure, component of the translation initiation factor 2B (eIF2B) complex which is a heterodecamer of two sets of five different subunits: alpha, beta, gamma, delta and epsilon. Subunits alpha, beta and delta comprise a regulatory subcomplex and subunits epsilon and gamma comprise a catalytic subcomplex. Within the complex, the hexameric regulatory complex resides at the center, with the two heterodimeric catalytic subcomplexes bound on opposite sides.

The protein resides in the cytoplasm. It is found in the cytosol. In terms of biological role, acts as a component of the translation initiation factor 2B (eIF2B) complex, which catalyzes the exchange of GDP for GTP on the eukaryotic initiation factor 2 (eIF2) complex gamma subunit. Its guanine nucleotide exchange factor activity is repressed when bound to eIF2 complex phosphorylated on the alpha subunit, thereby limiting the amount of methionyl-initiator methionine tRNA available to the ribosome and consequently global translation is repressed. This is Translation initiation factor eIF2B subunit gamma from Caenorhabditis elegans.